A 221-amino-acid polypeptide reads, in one-letter code: UPF0502 protein PSPTO_2686 (221 aa).

The protein belongs to the UPF0502 family.

The protein is UPF0502 protein PSPTO_2686 of Pseudomonas syringae pv. tomato (strain ATCC BAA-871 / DC3000).